Here is a 253-residue protein sequence, read N- to C-terminus: Thiamine import ATP-binding protein ThiQ (253 aa).

Positions 8 to 236 constitute an ABC transporter domain; the sequence is VRLDKVSFSY…AGPEAFRRYI (229 aa). 38-45 serves as a coordination point for ATP; sequence GPSGSGKS.

The protein belongs to the ABC transporter superfamily. Thiamine importer (TC 3.A.1.19.1) family. The complex is composed of two ATP-binding proteins (ThiQ), two transmembrane proteins (ThiP) and a solute-binding protein (ThiB).

The protein resides in the cell inner membrane. It carries out the reaction thiamine(out) + ATP + H2O = thiamine(in) + ADP + phosphate + H(+). Part of the ABC transporter complex ThiBPQ involved in thiamine import. Responsible for energy coupling to the transport system. This Mesorhizobium japonicum (strain LMG 29417 / CECT 9101 / MAFF 303099) (Mesorhizobium loti (strain MAFF 303099)) protein is Thiamine import ATP-binding protein ThiQ.